A 437-amino-acid polypeptide reads, in one-letter code: UDP-N-acetylmuramoylalanine--D-glutamate ligase (437 aa).

Residue 112–118 (GSNGKST) coordinates ATP.

The protein belongs to the MurCDEF family.

The protein resides in the cytoplasm. It carries out the reaction UDP-N-acetyl-alpha-D-muramoyl-L-alanine + D-glutamate + ATP = UDP-N-acetyl-alpha-D-muramoyl-L-alanyl-D-glutamate + ADP + phosphate + H(+). Its pathway is cell wall biogenesis; peptidoglycan biosynthesis. Its function is as follows. Cell wall formation. Catalyzes the addition of glutamate to the nucleotide precursor UDP-N-acetylmuramoyl-L-alanine (UMA). The polypeptide is UDP-N-acetylmuramoylalanine--D-glutamate ligase (murD) (Haemophilus influenzae (strain ATCC 51907 / DSM 11121 / KW20 / Rd)).